Consider the following 400-residue polypeptide: Argininosuccinate synthase (400 aa).

ATP-binding positions include 10–18 and Ala38; that span reads AYSGGVDTS. An L-citrulline-binding site is contributed by Tyr89. Residue Gly119 coordinates ATP. Positions 121, 125, and 126 each coordinate L-aspartate. Asn125 contributes to the L-citrulline binding site. Positions 129, 177, 186, 262, and 274 each coordinate L-citrulline.

The protein belongs to the argininosuccinate synthase family. Type 1 subfamily. As to quaternary structure, homotetramer.

It localises to the cytoplasm. It carries out the reaction L-citrulline + L-aspartate + ATP = 2-(N(omega)-L-arginino)succinate + AMP + diphosphate + H(+). Its pathway is amino-acid biosynthesis; L-arginine biosynthesis; L-arginine from L-ornithine and carbamoyl phosphate: step 2/3. This Prochlorococcus marinus (strain NATL2A) protein is Argininosuccinate synthase.